We begin with the raw amino-acid sequence, 172 residues long: Adenine phosphoribosyltransferase (172 aa).

This sequence belongs to the purine/pyrimidine phosphoribosyltransferase family. In terms of assembly, homodimer.

The protein resides in the cytoplasm. It carries out the reaction AMP + diphosphate = 5-phospho-alpha-D-ribose 1-diphosphate + adenine. Its pathway is purine metabolism; AMP biosynthesis via salvage pathway; AMP from adenine: step 1/1. In terms of biological role, catalyzes a salvage reaction resulting in the formation of AMP, that is energically less costly than de novo synthesis. This Streptococcus thermophilus (strain ATCC BAA-250 / LMG 18311) protein is Adenine phosphoribosyltransferase.